Reading from the N-terminus, the 449-residue chain is L-lysine-epsilon aminotransferase (449 aa).

Positions 128 and 129 each coordinate pyridoxal 5'-phosphate. 2-oxoglutarate contacts are provided by arginine 170 and glutamine 274. Arginine 170 lines the L-lysine pocket. Glutamine 274 provides a ligand contact to pyridoxal 5'-phosphate. At lysine 300 the chain carries N6-(pyridoxal phosphate)lysine. Arginine 422 is a 2-oxoglutarate binding site.

Belongs to the class-III pyridoxal-phosphate-dependent aminotransferase family. Requires pyridoxal 5'-phosphate as cofactor.

The catalysed reaction is L-lysine + 2-oxoglutarate = (S)-2-amino-6-oxohexanoate + L-glutamate. Catalyzes the transfer of the terminal amino group of L-lysine to alpha-ketoglutarate to yield L-glutamate and 2-aminoadipate 6-semialdehyde ((S)-2-amino-6-oxohexanoate), which is spontaneously converted to the dehydrated form 1-piperideine 6-carboxylate. The chain is L-lysine-epsilon aminotransferase from Mycobacterium bovis (strain ATCC BAA-935 / AF2122/97).